A 432-amino-acid chain; its full sequence is Ribosomal protein uS12 methylthiotransferase RimO (432 aa).

One can recognise an MTTase N-terminal domain in the interval 4-120; the sequence is HNVFLLSLGC…LLQAIGAQYR (117 aa). Cys13, Cys49, Cys83, Cys144, Cys148, and Cys151 together coordinate [4Fe-4S] cluster. A Radical SAM core domain is found at 130–359; it reads LTPPHISYLK…MELQETIAKE (230 aa). The TRAM domain maps to 362–429; it reads QLFEGKELTV…AYELHGTITA (68 aa).

It belongs to the methylthiotransferase family. RimO subfamily. It depends on [4Fe-4S] cluster as a cofactor.

The protein localises to the cytoplasm. It catalyses the reaction L-aspartate(89)-[ribosomal protein uS12]-hydrogen + (sulfur carrier)-SH + AH2 + 2 S-adenosyl-L-methionine = 3-methylsulfanyl-L-aspartate(89)-[ribosomal protein uS12]-hydrogen + (sulfur carrier)-H + 5'-deoxyadenosine + L-methionine + A + S-adenosyl-L-homocysteine + 2 H(+). Functionally, catalyzes the methylthiolation of an aspartic acid residue of ribosomal protein uS12. The sequence is that of Ribosomal protein uS12 methylthiotransferase RimO from Chlorobium phaeobacteroides (strain DSM 266 / SMG 266 / 2430).